Consider the following 536-residue polypeptide: Chaperonin GroEL 1 (536 aa).

ATP-binding positions include 29 to 32, 86 to 90, Gly413, 476 to 478, and Asp492; these read TLGP, DGTTT, and NAA.

Belongs to the chaperonin (HSP60) family. In terms of assembly, forms a cylinder of 14 subunits composed of two heptameric rings stacked back-to-back. Interacts with the co-chaperonin GroES.

It localises to the cytoplasm. The enzyme catalyses ATP + H2O + a folded polypeptide = ADP + phosphate + an unfolded polypeptide.. Functionally, together with its co-chaperonin GroES, plays an essential role in assisting protein folding. The GroEL-GroES system forms a nano-cage that allows encapsulation of the non-native substrate proteins and provides a physical environment optimized to promote and accelerate protein folding. The protein is Chaperonin GroEL 1 of Nocardia farcinica (strain IFM 10152).